The following is a 78-amino-acid chain: Large ribosomal subunit protein bL28 (78 aa).

Belongs to the bacterial ribosomal protein bL28 family.

The protein is Large ribosomal subunit protein bL28 of Hamiltonella defensa subsp. Acyrthosiphon pisum (strain 5AT).